The sequence spans 406 residues: MSQDVLADKPLLSRSMVAVLCAQFFSAFGDNALLFATLALIKQQLYPDWSQPILQMAFVATYIVLAPFVGQIADGFAKGRVMMVANGLKLAGALVICFGLNPFLGYSLVGVGAAAYSPAKYGILGEITSGEQLVKANGMMEASTIAAILLGSVAGGILADWHLMAALGVCALVYAIAVIANLFIPRLAAARSGASWRPRAMTGSFFTACRLLWQDSETRFSLAGTSLFWGAGVTLRFLLVLWVPVALGIADNATPTLLNAMVAIGIVVGAGAAARFVTLKTVKRCLPAGVLIGVMVTIFSLQNSMPMAYLLLIIIGILGGFFVVPLNALLQERGKHSVGAGNAIAVQNLGENTAMLFMLGLYSLVVKLGAPVVAVGVGFGVVFALAIALLWGWQWRQQRQKTRQPE.

A run of 11 helical transmembrane segments spans residues 16–36 (MVAV…LLFA), 53–73 (ILQM…GQIA), 91–111 (AGAL…LVGV), 139–159 (MMEA…GILA), 164–184 (MAAL…NLFI), 227–247 (LFWG…PVAL), 253–273 (ATPT…AGAA), 285–305 (CLPA…QNSM), 310–330 (LLLI…NALL), 349–369 (LGEN…VKLG), and 372–392 (VVAV…LLWG).

This sequence belongs to the major facilitator superfamily. LplT (TC 2.A.1.42) family.

It localises to the cell inner membrane. Its function is as follows. Catalyzes the facilitated diffusion of 2-acyl-glycero-3-phosphoethanolamine (2-acyl-GPE) into the cell. The protein is Lysophospholipid transporter LplT of Yersinia pestis bv. Antiqua (strain Antiqua).